The following is a 406-amino-acid chain: WD repeat and SOCS box-containing protein 2 (406 aa).

A disordered region spans residues 70-89; it reads AKSRSSKNETKGRGSPKEKT. 5 WD repeats span residues 107–150, 153–193, 197–236, 239–278, and 293–332; these read PPSK…LLLN, GHQD…KQIQ, GHLQ…LIRK, GHQS…RLRS, and VHIS…PIAF. The 49-residue stretch at 358–406 folds into the SOCS box domain; the sequence is HVQFWTAPRVLSSLKHLCRKALRSFLTTYQVLALPIPKKMKEFLTYRTF.

Its pathway is protein modification; protein ubiquitination. In terms of biological role, may be a substrate-recognition component of a SCF-like ECS (Elongin-Cullin-SOCS-box protein) E3 ubiquitin ligase complex which mediates the ubiquitination and subsequent proteasomal degradation of target proteins. In Bos taurus (Bovine), this protein is WD repeat and SOCS box-containing protein 2 (WSB2).